A 255-amino-acid chain; its full sequence is Thiazole synthase (255 aa).

Catalysis depends on Lys-96, which acts as the Schiff-base intermediate with DXP. 1-deoxy-D-xylulose 5-phosphate is bound by residues Gly-157, 183 to 184 (AG), and 205 to 206 (NT).

Belongs to the ThiG family. Homotetramer. Forms heterodimers with either ThiH or ThiS.

Its subcellular location is the cytoplasm. It catalyses the reaction [ThiS sulfur-carrier protein]-C-terminal-Gly-aminoethanethioate + 2-iminoacetate + 1-deoxy-D-xylulose 5-phosphate = [ThiS sulfur-carrier protein]-C-terminal Gly-Gly + 2-[(2R,5Z)-2-carboxy-4-methylthiazol-5(2H)-ylidene]ethyl phosphate + 2 H2O + H(+). Its pathway is cofactor biosynthesis; thiamine diphosphate biosynthesis. In terms of biological role, catalyzes the rearrangement of 1-deoxy-D-xylulose 5-phosphate (DXP) to produce the thiazole phosphate moiety of thiamine. Sulfur is provided by the thiocarboxylate moiety of the carrier protein ThiS. In vitro, sulfur can be provided by H(2)S. This is Thiazole synthase from Geobacillus sp. (strain WCH70).